Consider the following 264-residue polypeptide: Small ribosomal subunit protein eS1 (264 aa).

A disordered region spans residues 232–264; sequence HGEGGGAGKPSGDEAGTKVERADGYEPPVQESV. Residues 242–255 are compositionally biased toward basic and acidic residues; the sequence is SGDEAGTKVERADG.

It belongs to the eukaryotic ribosomal protein eS1 family. Component of the small ribosomal subunit. Mature ribosomes consist of a small (40S) and a large (60S) subunit. The 40S subunit contains about 33 different proteins and 1 molecule of RNA (18S). The 60S subunit contains about 49 different proteins and 3 molecules of RNA (28S, 5.8S and 5S). Part of the small subunit (SSU) processome, composed of more than 70 proteins and the RNA chaperone small nucleolar RNA (snoRNA) U3.

The protein resides in the cytoplasm. It is found in the nucleus. The protein localises to the nucleolus. Its function is as follows. Component of the small ribosomal subunit. The ribosome is a large ribonucleoprotein complex responsible for the synthesis of proteins in the cell. Part of the small subunit (SSU) processome, first precursor of the small eukaryotic ribosomal subunit. During the assembly of the SSU processome in the nucleolus, many ribosome biogenesis factors, an RNA chaperone and ribosomal proteins associate with the nascent pre-rRNA and work in concert to generate RNA folding, modifications, rearrangements and cleavage as well as targeted degradation of pre-ribosomal RNA by the RNA exosome. May play a role during erythropoiesis. This chain is Small ribosomal subunit protein eS1, found in Taeniopygia guttata (Zebra finch).